A 321-amino-acid polypeptide reads, in one-letter code: Ornithine carbamoyltransferase (321 aa).

Residues 53 to 56, glutamine 80, arginine 104, and 131 to 134 each bind carbamoyl phosphate; these read STRT and HPCQ. L-ornithine is bound by residues asparagine 166, aspartate 230, and 234–235; that span reads SM. Carbamoyl phosphate contacts are provided by residues 270-271 and arginine 298; that span reads CL.

The protein belongs to the aspartate/ornithine carbamoyltransferase superfamily. OTCase family.

The protein localises to the cytoplasm. The enzyme catalyses carbamoyl phosphate + L-ornithine = L-citrulline + phosphate + H(+). It participates in amino-acid biosynthesis; L-arginine biosynthesis; L-arginine from L-ornithine and carbamoyl phosphate: step 1/3. Reversibly catalyzes the transfer of the carbamoyl group from carbamoyl phosphate (CP) to the N(epsilon) atom of ornithine (ORN) to produce L-citrulline. The protein is Ornithine carbamoyltransferase of Bifidobacterium longum (strain NCC 2705).